The sequence spans 153 residues: Ribosome maturation factor RimP (153 aa).

The protein belongs to the RimP family.

The protein localises to the cytoplasm. In terms of biological role, required for maturation of 30S ribosomal subunits. This chain is Ribosome maturation factor RimP, found in Clostridium botulinum (strain Alaska E43 / Type E3).